The primary structure comprises 177 residues: Large ribosomal subunit protein uL6 (177 aa).

The protein belongs to the universal ribosomal protein uL6 family. Part of the 50S ribosomal subunit.

Functionally, this protein binds to the 23S rRNA, and is important in its secondary structure. It is located near the subunit interface in the base of the L7/L12 stalk, and near the tRNA binding site of the peptidyltransferase center. The polypeptide is Large ribosomal subunit protein uL6 (Methylobacillus flagellatus (strain ATCC 51484 / DSM 6875 / VKM B-1610 / KT)).